The chain runs to 413 residues: Putative glutamate synthase [NADPH] small chain (413 aa).

The [4Fe-4S] cluster site is built by cysteine 33, cysteine 37, cysteine 43, and cysteine 47.

In terms of assembly, aggregate of 4 catalytic active heterodimers, consisting of a large and a small subunit. The cofactor is [4Fe-4S] cluster.

The enzyme catalyses 2 L-glutamate + NADP(+) = L-glutamine + 2-oxoglutarate + NADPH + H(+). It participates in amino-acid biosynthesis; L-glutamate biosynthesis via GLT pathway; L-glutamate from 2-oxoglutarate and L-glutamine (NADP(+) route): step 1/1. Its pathway is energy metabolism; nitrogen metabolism. In Cereibacter sphaeroides (Rhodobacter sphaeroides), this protein is Putative glutamate synthase [NADPH] small chain (gltD).